A 655-amino-acid polypeptide reads, in one-letter code: Integrin beta-5 (655 aa).

The region spanning 1 to 234 is the VWFA domain; it reads DLSLSMKDDL…QLIINAYNSI (234 aa). Topologically, residues 1 to 575 are extracellular; it reads DLSLSMKDDL…REPECGNTPN (575 aa). 2 residues coordinate Mg(2+): S3 and S5. Ca(2+) contacts are provided by S5, D8, D9, and D40. A disulfide bond links C58 and C67. Ca(2+) is bound by residues N98, D100, P102, and E103. E103 contributes to the Mg(2+) binding site. A disulfide bond links C115 and C156. Residue N203 is glycosylated (N-linked (GlcNAc...) asparagine). A Ca(2+)-binding site is contributed by G218. Disulfide bonds link C257–C269, C289–C317, C321–C340, C332–C343, C345–C354, C356–C386, C369–C384, C378–C389, C391–C404, C406–C427, C411–C425, C419–C430, and C432–C441. An N-linked (GlcNAc...) asparagine glycan is attached at N316. 4 consecutive I-EGF domains span residues 321-355, 356-405, 406-442, and 443-482; these read CSVG…TRCE, CQDG…PFCE, CDNF…DNCN, and CSTD…EMCE. An N-linked (GlcNAc...) asparagine glycan is attached at N408. An N-linked (GlcNAc...) asparagine glycan is attached at N442. 9 disulfide bridges follow: C443–C466, C450–C464, C458–C469, C471–C481, C484–C487, C491–C538, C497–C517, C500–C513, and C546–C570. 2 N-linked (GlcNAc...) asparagine glycosylation sites follow: N510 and N561. The chain crosses the membrane as a helical span at residues 576 to 598; that stretch reads AMTILLAVVGSILLVGLALLAIW. At 599-655 the chain is on the cytoplasmic side; the sequence is KLLVTIHDRREFAKFQSERSRARYEMASNPLYRKPISTHTVDFTFNKFNKSYNGTVD. A Phosphoserine modification is found at S626.

This sequence belongs to the integrin beta chain family. As to quaternary structure, heterodimer of an alpha and a beta subunit. Beta-5 (ITGB5) associates with alpha-V (ITGAV). Interacts with MYO10. Interacts with DAB2. Integrin ITGAV:ITGB5 interacts with FBLN5 (via N-terminus). ITGAV:ITGB5 interacts with CCN3. Interacts with tensin TNS3; TNS3 also interacts with PEAK1, thus acting as an adapter molecule to bridge the association of PEAK1 with ITGB5.

It localises to the cell membrane. Functionally, integrin alpha-V/beta-5 (ITGAV:ITGB5) is a receptor for fibronectin. It recognizes the sequence R-G-D in its ligand. In Papio cynocephalus (Yellow baboon), this protein is Integrin beta-5 (ITGB5).